Here is a 92-residue protein sequence, read N- to C-terminus: Phospholemman (92 aa).

A signal peptide spans 1-20 (MAPLHHILVLCVGFLTTATA). Over 21-35 (EAPQEHDPFTYDYQS) the chain is Extracellular. The chain crosses the membrane as a helical span at residues 36-56 (LRIGGLIIAGILFILGILIVL). Topologically, residues 57–92 (SRRCRCKFNQQQRTGEPDEEEGTFRSSIRRLSTRRR) are cytoplasmic. A lipid anchor (S-palmitoyl cysteine) is attached at C60. The residue at position 62 (C62) is an S-glutathionyl cysteine; alternate. Residue C62 is the site of S-palmitoyl cysteine; alternate attachment. The interval 65–92 (NQQQRTGEPDEEEGTFRSSIRRLSTRRR) is disordered. T79 is subject to Phosphothreonine. Residue S82 is modified to Phosphoserine. Residues S83 and S88 each carry the phosphoserine; by PKA and PKC modification. Basic residues predominate over residues 83 to 92 (SIRRLSTRRR). T89 bears the Phosphothreonine; by PKC mark.

Belongs to the FXYD family. Homotetramer. Monomer. Regulatory subunit of the sodium/potassium-transporting ATPase (NKA) which is composed of a catalytic alpha subunit, a non-catalytic beta subunit and an additional regulatory subunit. The monomeric form associates with NKA while the oligomeric form does not. Interacts with the catalytic alpha-1 subunit ATP1A1. Also interacts with the catalytic alpha-2 and alpha-3 subunits ATP1A2 and ATP1A3. Very little interaction with the alpha subunits ATP1A1, ATP1A2 or ATP1A3 when phosphorylated at Ser-83. Interacts with non-catalytic beta-1 subunit ATP1B1. Oxidative stress decreases interaction with ATP1A1 but increases interaction with ATP1B1. Major plasma membrane substrate for cAMP-dependent protein kinase (PKA) and protein kinase C (PKC) in several different tissues. Phosphorylated in response to insulin and adrenergic stimulation. Phosphorylation at Ser-88 stimulates sodium/potassium-transporting ATPase activity while the unphosphorylated form inhibits sodium/potassium-transporting ATPase activity. Phosphorylation increases tetramerization, decreases binding to ATP1A1 and reduces inhibition of ATP1A1 activity. Phosphorylation at Ser-83 leads to greatly reduced interaction with ATP1A1, ATP1A2 and ATP1A3. May be phosphorylated by DMPK. In terms of processing, palmitoylation increases half-life and stability and is enhanced upon phosphorylation at Ser-88 by PKA. As to expression, present in heart, esophagus, stomach, aorta, skeletal muscle, smooth muscle, and liver but absent from brain and kidney.

The protein localises to the cell membrane. It localises to the sarcolemma. Its subcellular location is the apical cell membrane. The protein resides in the membrane. It is found in the caveola. The protein localises to the T-tubule. In terms of biological role, associates with and regulates the activity of the sodium/potassium-transporting ATPase (NKA) which transports Na(+) out of the cell and K(+) into the cell. Inhibits NKA activity in its unphosphorylated state and stimulates activity when phosphorylated. Reduces glutathionylation of the NKA beta-1 subunit ATP1B1, thus reversing glutathionylation-mediated inhibition of ATP1B1. Contributes to female sexual development by maintaining the excitability of neurons which secrete gonadotropin-releasing hormone. The sequence is that of Phospholemman from Canis lupus familiaris (Dog).